The chain runs to 636 residues: Protein meg-1 (636 aa).

3 stretches are compositionally biased toward polar residues: residues 1–13 (MDNR…NGNF), 38–54 (SSGN…NQQQ), and 292–355 (LSMN…QYNH). 4 disordered regions span residues 1–54 (MDNR…NQQQ), 289–367 (LFNL…APHL), 484–504 (SDVA…SMYI), and 521–542 (LDSS…KTPS). Phosphoserine; by mbk-2 is present on Ser574. Residues 591-636 (MSQSFLHQQDDEAPDCTKNVHSESDLKQAEPQESDKQSDKELPSNE) are disordered. Residues 608 to 636 (KNVHSESDLKQAEPQESDKQSDKELPSNE) are compositionally biased toward basic and acidic residues.

In terms of assembly, interacts with pptr-1, pptr-2 and pgl-1. Phosphorylated by mbk-2, which promotes the disassembly of zygotic P granules in the anterior cytoplasm of pre-gastrulation embryos. Dephosphorylated by a phosphatase complex containing the PP2A regulatory subunit pptr-1, which promotes the assembly and accumulation of zygotic P granules in the posterior cytoplasm of pre-gastrulation embryos. Not expressed in the adult germline or in any somatic tissues.

The protein resides in the cytoplasmic granule. In terms of biological role, p granule component, which acts redundantly with P granule component meg-2 to promote P granule segregation during embryogenesis, and germ cell proliferation and differentiation in larval stages. In its phosphorylated form, and together with meg-2, promotes the disassembly of zygotic P granules in the anterior cytoplasm of pre-gastrulation embryos. In its dephosphorylated form, and together with meg-2, promotes the assembly and accumulation of zygotic P granules in the posterior cytoplasm of pre-gastrulation embryos. May function with the nanos family members nos-2 and nos-3 to promote germ cell proliferation during larval development. Required for fertility. This is Protein meg-1 from Caenorhabditis elegans.